The chain runs to 432 residues: Phosphoprotein associated with glycosphingolipid-enriched microdomains 1 (432 aa).

Residues 1–16 are Extracellular-facing; the sequence is MGPAGSLLGSGQMQIT. Residues 17 to 37 traverse the membrane as a helical; Signal-anchor for type III membrane protein segment; that stretch reads LWGSLAAVAIFFVITFLIFLC. Residues Cys37 and Cys40 are each lipidated (S-palmitoyl cysteine). The Cytoplasmic portion of the chain corresponds to 38-432; sequence SSCDREKKPR…LQQGRDITRL (395 aa). Residues Ser50 and Ser61 each carry the phosphoserine modification. The residue at position 105 (Tyr105) is a Phosphotyrosine; by LYN. A compositionally biased stretch (polar residues) spans 110–122; sequence TSASDLLDSQDST. Residues 110 to 137 are disordered; the sequence is TSASDLLDSQDSTGKPKCHQSRELPRIP. 3 positions are modified to phosphotyrosine: Tyr163, Tyr181, and Tyr227. Disordered regions lie at residues 197 to 230 and 244 to 432; these read EKGHSGKAKSTSASKELPGPQTEGKAEFAEYASV and SILG…ITRL. Residues 220-230 show a composition bias toward basic and acidic residues; sequence GKAEFAEYASV. Ser229 is modified (phosphoserine). Positions 316–356 are enriched in polar residues; the sequence is MYSSVNKPGQLVNKSGQSLTVPESTYTSIQGDPQRSPSSCN. Tyr317 is modified (phosphotyrosine; by FYN and LYN). The interval 317–320 is interaction with CSK; that stretch reads YSSV. A Phosphoserine modification is found at Ser354. Tyr359 carries the phosphotyrosine modification. Ser380 is subject to Phosphoserine. Residues Tyr387 and Tyr417 each carry the phosphotyrosine modification. The interval 430 to 432 is interaction with NHERF1; the sequence is TRL.

In terms of assembly, interacts with FYN. When phosphorylated, interacts with CSK. Interacts with NHERF1/EBP50. In resting T-cells, part of a PAG1-NHERF1-MSN complex which is disrupted upon TCR activation. Interacts with LYN on plasma membrane lipid rafts. Identified in a complex with LYN and STAT3. Palmitoylated. Post-translationally, phosphorylated by FYN on Tyr-317 in resting T-cells; which promotes interaction with CSK. Dephosphorylated by PTPRC/CD45 upon TCR activation; which leads to CSK dissociation. May also be dephosphorylated by PTPN11. Hyperphosphorylated in mast cells upon FCER1 activation. Phosphorylated by LYN. In terms of tissue distribution, ubiquitously expressed. Present in germinal center B-cells, plasma cells, T-cells, monocytes and platelets (at protein level).

The protein localises to the cell membrane. Negatively regulates TCR (T-cell antigen receptor)-mediated signaling in T-cells and FCER1 (high affinity immunoglobulin epsilon receptor)-mediated signaling in mast cells. Promotes CSK activation and recruitment to lipid rafts, which results in LCK inhibition. Inhibits immunological synapse formation by preventing dynamic arrangement of lipid raft proteins. May be involved in cell adhesion signaling. The sequence is that of Phosphoprotein associated with glycosphingolipid-enriched microdomains 1 (PAG1) from Homo sapiens (Human).